Here is a 558-residue protein sequence, read N- to C-terminus: EF-hand and coiled-coil domain-containing protein 1 (558 aa).

One can recognise an EF-hand domain in the interval 43–78; it reads GLDQYLQEVFHHLDCRGAGRLPRADFRALCAVLGLN. A compositionally biased stretch (basic residues) spans 161-170; that stretch reads LRRPRRRRRP. 2 disordered regions span residues 161–183 and 304–395; these read LRRPRRRRRPGSPSLHGGAYGER and RSEG…QPSG. Coiled-coil stretches lie at residues 179-304 and 453-495; these read AYGE…RGYR and VEAE…LNIS.

The chain is EF-hand and coiled-coil domain-containing protein 1 (Efcc1) from Mus musculus (Mouse).